A 359-amino-acid chain; its full sequence is Probably inactive receptor-like protein kinase At5g41680 (359 aa).

One can recognise a Protein kinase domain in the interval 59-357 (AASAEILGKG…KLIQDIPTNF (299 aa)). ATP contacts are provided by residues 65 to 73 (LGKGAHVTT) and K87.

Belongs to the protein kinase superfamily. Ser/Thr protein kinase family.

The sequence is that of Probably inactive receptor-like protein kinase At5g41680 from Arabidopsis thaliana (Mouse-ear cress).